The sequence spans 493 residues: Galactose-1-phosphate uridylyltransferase 2 (493 aa).

It belongs to the galactose-1-phosphate uridylyltransferase type 2 family.

The protein resides in the cytoplasm. The catalysed reaction is alpha-D-galactose 1-phosphate + UDP-alpha-D-glucose = alpha-D-glucose 1-phosphate + UDP-alpha-D-galactose. It participates in carbohydrate metabolism; galactose metabolism. This chain is Galactose-1-phosphate uridylyltransferase 2 (galT2), found in Streptococcus pneumoniae (strain ATCC BAA-255 / R6).